Consider the following 166-residue polypeptide: Small ribosomal subunit protein uS5 (166 aa).

Residues 12 to 75 form the S5 DRBM domain; sequence YIEKLVQVNR…EAARRNMIQV (64 aa).

This sequence belongs to the universal ribosomal protein uS5 family. In terms of assembly, part of the 30S ribosomal subunit. Contacts proteins S4 and S8.

In terms of biological role, with S4 and S12 plays an important role in translational accuracy. Functionally, located at the back of the 30S subunit body where it stabilizes the conformation of the head with respect to the body. This Pseudomonas fluorescens (strain SBW25) protein is Small ribosomal subunit protein uS5.